Here is a 494-residue protein sequence, read N- to C-terminus: Chromosomal replication initiator protein DnaA (494 aa).

The interval 1–103 (MTNIGGPVVE…LRVEVIVRGM (103 aa)) is domain I, interacts with DnaA modulators. The segment at 103–148 (MKRVSKGVVCRTSAAPVVLEGQTASSFVESYTEPSVKDIEAGVFGS) is domain II. Residues 149 to 371 (PLDSRYTFES…GAFNQLLFRQ (223 aa)) are domain III, AAA+ region. Residues Gly195, Gly197, Lys198, and Thr199 each coordinate ATP. The segment at 372-494 (SFESDLSLER…LKRLIGEQAA (123 aa)) is domain IV, binds dsDNA.

The protein belongs to the DnaA family. Oligomerizes as a right-handed, spiral filament on DNA at oriC.

Its subcellular location is the cytoplasm. Its function is as follows. Plays an essential role in the initiation and regulation of chromosomal replication. ATP-DnaA binds to the origin of replication (oriC) to initiate formation of the DNA replication initiation complex once per cell cycle. Binds the DnaA box (a 9 base pair repeat at the origin) and separates the double-stranded (ds)DNA. Forms a right-handed helical filament on oriC DNA; dsDNA binds to the exterior of the filament while single-stranded (ss)DNA is stabiized in the filament's interior. The ATP-DnaA-oriC complex binds and stabilizes one strand of the AT-rich DNA unwinding element (DUE), permitting loading of DNA polymerase. After initiation quickly degrades to an ADP-DnaA complex that is not apt for DNA replication. Binds acidic phospholipids. The sequence is that of Chromosomal replication initiator protein DnaA from Bartonella quintana (strain Toulouse) (Rochalimaea quintana).